A 1183-amino-acid chain; its full sequence is Translation initiation factor IF-2 (1183 aa).

Disordered regions lie at residues 65 to 512 (SSKN…KVHI) and 540 to 579 (LARP…AMEL). Over residues 83–99 (TQKDQKTEPKKKNHDQT) the composition is skewed to basic and acidic residues. The segment covering 100–130 (ELSQAKLNTLLKPSQTLIKSQGSSQANNQKA) has biased composition (polar residues). The segment covering 220–229 (PKIDIQDKKP) has biased composition (basic and acidic residues). Residues 231–270 (QPNNQKAKTRINQGEISPQKVGQGNIQKIKSQNKQNAPSR) are compositionally biased toward polar residues. The span at 288–304 (IRKEKPVNKPHTNEVRN) shows a compositional bias: basic and acidic residues. 2 stretches are compositionally biased toward polar residues: residues 321–336 (ANRQ…NNRI) and 357–367 (NRTTQGQNRPG). Over residues 485–499 (GRPDWDDSAKLDALR) the composition is skewed to basic and acidic residues. Basic residues-rich tracts occupy residues 544 to 553 (SKPKVGKRNN) and 560 to 574 (LKKR…RQRR). Residues 675–847 (RRPPVVTVMG…VLLVTEVEDL (173 aa)) form the tr-type G domain. Residues 684–691 (GHVDHGKT) are G1. 684 to 691 (GHVDHGKT) provides a ligand contact to GTP. Residues 709 to 713 (GITQH) are G2. The G3 stretch occupies residues 734–737 (DTPG). Residues 734–738 (DTPGH) and 788–791 (NKID) each bind GTP. Residues 788-791 (NKID) are G4. The segment at 824–826 (SAI) is G5.

It belongs to the TRAFAC class translation factor GTPase superfamily. Classic translation factor GTPase family. IF-2 subfamily.

It localises to the cytoplasm. Functionally, one of the essential components for the initiation of protein synthesis. Protects formylmethionyl-tRNA from spontaneous hydrolysis and promotes its binding to the 30S ribosomal subunits. Also involved in the hydrolysis of GTP during the formation of the 70S ribosomal complex. This is Translation initiation factor IF-2 from Prochlorococcus marinus (strain NATL2A).